The following is an 878-amino-acid chain: MQESLVLEMLQTGKTATWPANSGTQDGEGFVDKEVKGVPSTDRTKRMKERFMNAKCKMDMEAPIAYTKAWRMYEGKPLYVRRGLSYKYMLEHLTPVIRPDELITMSKTRYDRGATQVPQFATDFMISFLTQAEDQKDEAKLFSVEGKDEAHTVDEEGWTPVGQLFSIREEEVKPMLEVLEYWKTRCVENVSDEWMKTSFPMYQDYINAKKVGLFPGSGLHAGCDGRWIPAYDVVLGGLNKVIDECKKNIAKTVVTTKDVADKVFFWQGCIYACEGAIAWANNYAKEARRLAEITPEPRKTELLQMAERLERVPAEPPRNFMEAVQALWTAQILIISDSLALGVSPGRWGKLLEPYYEKDLADGVITKEQALEVMEMLRIKFSTEEYITPSLWAAMASSNSFMNLAVGGLDPKTGQCTDNELEDLILQAGINMPTPQPTLSMLLSNKTSDHLALKAAECTKAGNGYPAWFNYDMMVEHNLWCYADEGITMEDARNCALSGCVENGLAGTGHPIAHPAFYNEGKTIELALHEGVDPRTGIKVMDGIKPVESYEDVWNNFVKIREHFMRVYMRYWNEVVACQRDIHPKIMGSIFMHDCVENGRPVDNLGCRYNGSVTLLDSGTVNVVNGLAAMKKLIWEDHKYTYAEFKEAMDNNFGFVLGAEKGNFSMLNQEIDPEKHMKYAQIHRDILNCPKFGNDDDFVDDIFVKVWQDYDRVTGSETTYNGYRWITAALSISAHGPHGRVTGATPDGRLAGVTLCDGILSASPGTDVNGPIALIRSGVKLDPTTFASVQLNMKFHPSAIRGEEGSKNFVDFIRSYFNMGGYHVQFNIVDSKMLRDAQDKPQNYRDLMVRVAGFSAYWNELGKPIQDEVIARTEYDAL.

One can recognise a PFL domain in the interval D42–L750. The active-site Cysteine radical intermediate is C500. The active-site Proton acceptor is the E502. The 121-residue stretch at G758 to L878 folds into the Glycine radical domain. The residue at position 853 (G853) is a Glycine radical.

The protein belongs to the glycyl radical enzyme (GRE) family. Homodimer (predominantly) and monomer. Requires the activating protein OsIADAE to generate the key active site glycyl radical on Gly-853 that is involved in catalysis.

The enzyme catalyses (indol-3-yl)acetate + H(+) = skatole + CO2. The protein operates within amino-acid degradation. Functionally, glycyl radical enzyme that catalyzes the terminal step of tryptophan fermentation, the decarboxylation of indoleacetate to form skatole, a malodorous compound that contributes to the characteristic smell of animal feces. No activity is detected with phenylacetate or p-hydroxyphenylacetate as substrates, indicating high substrate specificity. The chain is Indoleacetate decarboxylase from Tractidigestivibacter scatoligenes (Olsenella scatoligenes).